The chain runs to 598 residues: Membrane protein insertase YidC (598 aa).

Residues 7 to 27 (NYFIAIALSVLIVLGWQFLYM) traverse the membrane as a helical segment. Positions 37 to 76 (AQEAQKAQQQTEQVQQPAAGGQTPAQTSGAAPSGQAAATA) are disordered. The segment covering 40–76 (AQKAQQQTEQVQQPAAGGQTPAQTSGAAPSGQAAATA) has biased composition (low complexity). The next 4 membrane-spanning stretches (helical) occupy residues 377–397 (FGVA…PLAS), 447–467 (WPVA…YITI), 492–512 (LFGL…WPLI), and 538–558 (WMPL…VIYW).

It belongs to the OXA1/ALB3/YidC family. Type 1 subfamily. As to quaternary structure, interacts with the Sec translocase complex via SecD. Specifically interacts with transmembrane segments of nascent integral membrane proteins during membrane integration.

It localises to the cell inner membrane. Required for the insertion and/or proper folding and/or complex formation of integral membrane proteins into the membrane. Involved in integration of membrane proteins that insert both dependently and independently of the Sec translocase complex, as well as at least some lipoproteins. Aids folding of multispanning membrane proteins. This chain is Membrane protein insertase YidC, found in Rhizobium johnstonii (strain DSM 114642 / LMG 32736 / 3841) (Rhizobium leguminosarum bv. viciae).